The sequence spans 304 residues: Aspartate carbamoyltransferase catalytic subunit (304 aa).

Carbamoyl phosphate is bound by residues R55 and T56. K83 is an L-aspartate binding site. The carbamoyl phosphate site is built by R105, H133, and Q136. L-aspartate-binding residues include R166 and R220. Residues G261 and P262 each coordinate carbamoyl phosphate.

The protein belongs to the aspartate/ornithine carbamoyltransferase superfamily. ATCase family. Heterododecamer (2C3:3R2) of six catalytic PyrB chains organized as two trimers (C3), and six regulatory PyrI chains organized as three dimers (R2).

The catalysed reaction is carbamoyl phosphate + L-aspartate = N-carbamoyl-L-aspartate + phosphate + H(+). It functions in the pathway pyrimidine metabolism; UMP biosynthesis via de novo pathway; (S)-dihydroorotate from bicarbonate: step 2/3. Its function is as follows. Catalyzes the condensation of carbamoyl phosphate and aspartate to form carbamoyl aspartate and inorganic phosphate, the committed step in the de novo pyrimidine nucleotide biosynthesis pathway. This Caldanaerobacter subterraneus subsp. tengcongensis (strain DSM 15242 / JCM 11007 / NBRC 100824 / MB4) (Thermoanaerobacter tengcongensis) protein is Aspartate carbamoyltransferase catalytic subunit.